A 1843-amino-acid chain; its full sequence is MEPAERAGVGEPPEPGGRPEPGPRGFVPQKEIVYNKLLPYAERLDAESDLQLAQIKCNLGRAVQLQELWPGGLFWTRKLSTYIRLYGRKFSKEDHVLFIKLLYELVSIPKLEISMMQGFARLLINLLKKKELLSRADLELPWRPLYDMVERILYSKTEHLGLNWFPNSVENILKTLVKSCRPYFPADATAEMLEEWRPLMCPFDVTMQKAITYFEIFLPTSLPPELHHKGFKLWFDELIGLWVSVQNLPQWEGQLVNLFARLATDNIGYIDWDPYVPKIFTRILRSLNLPVGSSQVLVPRFLTNAYDIGHAVIWITAMMGGPSKLVQKHLAGLFNSITSFYHPSNNGRWLNKLMKLLQRLPNSVVRRLHRERYKKPSWLTPVPDSHKLTDQDVTDFVQCIIQPVLLAMFSKTGSLEAAQALQNLALMRPELVIPPVLERTYPALETLTEPHQLTATLSCVIGVARSLVSGGRWFPEGPTHMLPLLMRALPGVDPNDFSKCMITFQFIATFSTLVPLVDCSSVLQERNDLTEVERELCSATAEFEDFVLQFMDRCFGLIESSTLEQTREETETEKMTHLESLVELGLSSTFSTILTQCSKEIFMVALQKVFNFSTSHIFETRVAGRMVADMCRAAVKCCPEESLKLFVPHCCSVITQLTMNDDVLNDEELDKELLWNLQLLSEITRVDGRKLLLYREQLVKILQRTLHLTCKQGYTLSCNLLHHLLRSTTLIYPTEYCSVPGGFDKPPSEYFPIKDWGKPGDLWNLGIQWHVPSSEEVSFAFYLLDSFLQPELVKLQHCGDGKLEMSRDDILQSLTIVHNCLIGSGNLLPPLKGEPVTNLVPSMVSLEETKLYTGLEYDLSRENHREVIATVIRKLLNHILDNSEDDTKSLFLIIKIIGDLLQFQGSHKHEFDSRWKSFNLVKKSMENRLHGKKQHIRALLIDRVMLQHELRTLTVEGCEYKKIHQDMIRDLLRLSTSSYSQVRNKAQQTFFAALGAYNFCCRDIIPLVLEFLRPDRQGVTQQQFKGALYCLLGNHSGVCLANLHDWDCIVQTWPAIVSSGLSQAMSLEKPSIVRLFDDLAEKIHRQYETIGLDFTIPKSCVEIAELLQQSKNPSINQILLSPEKIKEGIKRQQEKNADALRNYENLVDTLLDGVEQRNLPWKFEHIGIGLLSLLLRDDRVLPLRAIRFFVENLNHDAIVVRKMAISAVAGILKQLKRTHKKLTINPCEISGCPKPTQIIAGDRPDNHWLHYDSKTIPRTKKEWESSCFVEKTHWGYYTWPKNMVVYAGVEEQPKLGRSREDMTEAEQIIFDHFSDPKFVEQLITFLSLEDRKGKDKFNPRRFCLFKGIFRNFDDAFLPVLKPHLEHLVADSHESTQRCVAEIIAGLIRGSKHWTFEKVEKLWELLCPLLRTALSNITVETYNDWGACIATSCESRDPRKLHWLFELLLESPLSGEGGSFVDACRLYVLQGGLAQQEWRVPELLHRLLKYLEPKLTQVYKNVRERIGSVLTYIFMIDVSLPNTTPTISPHVPEFTARILEKLKPLMDVDEEIQNHVMEENGIGEEDERTQGIKLLKTILKWLMASAGRSFSTAVTEQLQLLPLFFKIAPVENDNSYDELKRDAKLCLSLMSQGLLYPHQVPLVLQVLKQTARSSSWHARYTVLTYLQTMVFYNLFIFLNNEDAVKDIRWLVISLLEDEQLEVREMAATTLSGLLQCNFLTMDSPMQIHFEQLCKTKLPKKRKRDPGSVGDTIPSAELVKRHAGVLGLGACVLSSPYDVPTWMPQLLMNLSAHLNDPQPIEMTVKKTLSNFRRTHHDNWQEHKQQFTDDQLLVLTDLLVSPCYYA.

Over residues 1-11 (MEPAERAGVGE) the composition is skewed to low complexity. Residues 1–25 (MEPAERAGVGEPPEPGGRPEPGPRG) are disordered. A compositionally biased stretch (pro residues) spans 12-22 (PPEPGGRPEPG). HEAT repeat units follow at residues 475-519 (PEGP…LVDC) and 998-1037 (NFCC…NHSG). Ser-1121 is subject to Phosphoserine. HEAT repeat units lie at residues 1179–1217 (RVLP…QLKR) and 1354–1392 (DAFL…GSKH). Position 1614 is a phosphoserine (Ser-1614). 2 HEAT repeats span residues 1636–1674 (PHQV…YNLF) and 1680–1718 (EDAV…CNFL). Positions 1650–1738 (ARSSSWHARY…EQLCKTKLPK (89 aa)) are bromodomain-like (BRDL). Residue Ser-1746 is modified to Phosphoserine.

It belongs to the BLM10 family. As to quaternary structure, homodimer. Interacts with the 20S and 26S proteasomes. Component of the spermatoproteasome, a form of the proteasome specifically found in testis.

It is found in the cytoplasm. The protein localises to the cytosol. Its subcellular location is the nucleus. It localises to the nucleus speckle. Functionally, associated component of the proteasome that specifically recognizes acetylated histones and promotes ATP- and ubiquitin-independent degradation of core histones during spermatogenesis and DNA damage response. Recognizes and binds acetylated histones via its bromodomain-like (BRDL) region and activates the proteasome by opening the gated channel for substrate entry. Binds to the core proteasome via its C-terminus, which occupies the same binding sites as the proteasomal ATPases, opening the closed structure of the proteasome via an active gating mechanism. Component of the spermatoproteasome, a form of the proteasome specifically found in testis: binds to acetylated histones and promotes degradation of histones, thereby participating actively to the exchange of histones during spermatogenesis. Also involved in DNA damage response in somatic cells, by promoting degradation of histones following DNA double-strand breaks. This is Proteasome activator complex subunit 4 from Homo sapiens (Human).